Consider the following 962-residue polypeptide: Exportin-T (962 aa).

Met-1 is subject to N-acetylmethionine. The interval 1 to 385 (MDEQALLGLN…MLAVMKKLTY (385 aa)) is necessary for interaction with Ran, nuclear localization and nuclear import. The segment at 443–962 (FMEVEVAIRL…LKVFFQRAKP (520 aa)) is necessary for tRNA-binding, cytoplasmic localization and nuclear export. Residue Lys-634 is modified to N6-acetyllysine.

It belongs to the exportin family. As to quaternary structure, found in a complex with XPOT, Ran and tRNA. Probably found in a complex with nucleoporins. Interacts with Ran and tRNA in a GTP-dependent manner.

Its subcellular location is the nucleus. It is found in the cytoplasm. In terms of biological role, mediates the nuclear export of aminoacylated tRNAs. In the nucleus binds to tRNA and to the GTPase Ran in its active GTP-bound form. Docking of this trimeric complex to the nuclear pore complex (NPC) is mediated through binding to nucleoporins. Upon transit of a nuclear export complex into the cytoplasm, disassembling of the complex and hydrolysis of Ran-GTP to Ran-GDP (induced by RANBP1 and RANGAP1, respectively) cause release of the tRNA from the export receptor. XPOT then return to the nuclear compartment and mediate another round of transport. The directionality of nuclear export is thought to be conferred by an asymmetric distribution of the GTP- and GDP-bound forms of Ran between the cytoplasm and nucleus. The sequence is that of Exportin-T (XPOT) from Homo sapiens (Human).